The sequence spans 184 residues: ATP synthase subunit b, chloroplastic (184 aa).

Residues 27 to 49 (LATNPINLSVVFGVLIFFGKGVL) traverse the membrane as a helical segment.

This sequence belongs to the ATPase B chain family. In terms of assembly, F-type ATPases have 2 components, F(1) - the catalytic core - and F(0) - the membrane proton channel. F(1) has five subunits: alpha(3), beta(3), gamma(1), delta(1), epsilon(1). F(0) has four main subunits: a(1), b(1), b'(1) and c(10-14). The alpha and beta chains form an alternating ring which encloses part of the gamma chain. F(1) is attached to F(0) by a central stalk formed by the gamma and epsilon chains, while a peripheral stalk is formed by the delta, b and b' chains.

It is found in the plastid. It localises to the chloroplast thylakoid membrane. In terms of biological role, f(1)F(0) ATP synthase produces ATP from ADP in the presence of a proton or sodium gradient. F-type ATPases consist of two structural domains, F(1) containing the extramembraneous catalytic core and F(0) containing the membrane proton channel, linked together by a central stalk and a peripheral stalk. During catalysis, ATP synthesis in the catalytic domain of F(1) is coupled via a rotary mechanism of the central stalk subunits to proton translocation. Component of the F(0) channel, it forms part of the peripheral stalk, linking F(1) to F(0). The protein is ATP synthase subunit b, chloroplastic of Arabidopsis thaliana (Mouse-ear cress).